The primary structure comprises 332 residues: MDKSLFYNPQKMLSYDRILNFVIGARGIGKSYAMKVYPINRFIKYGEQFIYVRRYKPELAKVSNYFNDVAQEFPDHELVVKGRRFYIDGKLAGWAIPLSVWQSEKSNAYPNVSTIVFDEFIREKDNSNYIPNEVSALLNLMDTVFRNRERVRCICLSNAVSVVNPYFLFFNLVPDVNKRFNVYDDALIEIPDSLDFSSERRKTRFGRLIDGTEYGEMSLDNQFIGDSQVFIEKRSKDSKFVFSIVYNGFTLGVWVDVNQGLMYIDTAHDPSTKNVYTLTTDDLNENMMLITNYKNNYHLRKLASAFMNGYLRFDNQVIRNIAYELFRKMRIQ.

The interval 1 to 207 is ATPase; the sequence is MDKSLFYNPQ…SERRKTRFGR (207 aa). ATP is bound at residue 24–31; sequence GARGIGKS. Residues 233–332 form a DNA-binding region; it reads KRSKDSKFVF…YELFRKMRIQ (100 aa).

Belongs to the phi29likevirus gp16 family. As to quaternary structure, homopentamer. Interacts with the packaging RNA (pRNA). Part of a DNA-gp3-gp16 complex.

The enzyme catalyses ATP + H2O = ADP + phosphate + H(+). ATPase required for the genome encapsidation reaction. Part of the active packaging motor via the binding to the packaging RNA (pRNA), itself fixed to the head-tail connector at the unique portal vertex of the prohead. Binds and supercoils the pre-formed, unit-length DNA bound to gp3 to produce an initiation complex for DNA packaging. Provides the energy to actively pump the viral DNA into the prohead. Approximately one molecule of ATP is used in the packaging of 2 bp of viral DNA. ATP hydrolysis results in a conformational change that causes the arginine/lysine finger of one subunit to move into the active site of its neighbor, where it interacts with the negatively charged oxygens on the gamma-phosphate of ATP. After packaging, the ATPase and the pRNA are released from the prohead. In Bacillus phage phi29 (Bacteriophage phi-29), this protein is DNA packaging protein (16).